Consider the following 464-residue polypeptide: MSKTLFDKVWDSHVVRKIEDGPDVFFIDRHFIHEVTSPVAFLGLKSRGVNVLYPERTFATADHNTPTINQHLPVQDPLSANQLQALEDNANEYGISHWGLGHQKNGIVHVVGPENGITLPGATIVCGDSHTSTHGAFGAIAFGIGTSEVEMVLSTQCIMQPKPKKMRINVNGKLSKGVGPKDVALYIIAQLTTSGGTGYFVEYAGDVFENMTMEGRMTVCNLSIEMGARGGMIAPDQTTFDFLEGRLYAPKGEAWTKAVEYWKTLKTDADAVFDAELNIKAEDIEPMITYGTNPGMGIGITKHIPSAKEVEGGEETYKKSLAYMGFNEDDVMIGKQIDYVFLGSCTNGRIEDFRAFAEIVKGRKKAENVTAWLVPGSHVVEAQIKEEGILDILTEAGFVLRQPGCSACLAMNDDKVPAGKYAVSTSNRNFEGRQGPGSRTLLASPIMAAAAAVTGKLTDPRELF.

[4Fe-4S] cluster-binding residues include cysteine 345, cysteine 405, and cysteine 408.

It belongs to the aconitase/IPM isomerase family. LeuC type 1 subfamily. As to quaternary structure, heterodimer of LeuC and LeuD. [4Fe-4S] cluster serves as cofactor.

The enzyme catalyses (2R,3S)-3-isopropylmalate = (2S)-2-isopropylmalate. The protein operates within amino-acid biosynthesis; L-leucine biosynthesis; L-leucine from 3-methyl-2-oxobutanoate: step 2/4. Catalyzes the isomerization between 2-isopropylmalate and 3-isopropylmalate, via the formation of 2-isopropylmaleate. This chain is 3-isopropylmalate dehydratase large subunit, found in Flavobacterium johnsoniae (strain ATCC 17061 / DSM 2064 / JCM 8514 / BCRC 14874 / CCUG 350202 / NBRC 14942 / NCIMB 11054 / UW101) (Cytophaga johnsonae).